We begin with the raw amino-acid sequence, 342 residues long: Phosphate acyltransferase (342 aa).

This sequence belongs to the PlsX family. As to quaternary structure, homodimer. Probably interacts with PlsY.

Its subcellular location is the cytoplasm. It catalyses the reaction a fatty acyl-[ACP] + phosphate = an acyl phosphate + holo-[ACP]. It functions in the pathway lipid metabolism; phospholipid metabolism. Catalyzes the reversible formation of acyl-phosphate (acyl-PO(4)) from acyl-[acyl-carrier-protein] (acyl-ACP). This enzyme utilizes acyl-ACP as fatty acyl donor, but not acyl-CoA. The polypeptide is Phosphate acyltransferase (Blochmanniella pennsylvanica (strain BPEN)).